Consider the following 48-residue polypeptide: Ribulose bisphosphate carboxylase large chain (48 aa).

It belongs to the RuBisCO large chain family. Type I subfamily. As to quaternary structure, heterohexadecamer of 8 large chains and 8 small chains.

It localises to the plastid. The protein localises to the chloroplast. The catalysed reaction is 2 (2R)-3-phosphoglycerate + 2 H(+) = D-ribulose 1,5-bisphosphate + CO2 + H2O. It carries out the reaction D-ribulose 1,5-bisphosphate + O2 = 2-phosphoglycolate + (2R)-3-phosphoglycerate + 2 H(+). In terms of biological role, ruBisCO catalyzes two reactions: the carboxylation of D-ribulose 1,5-bisphosphate, the primary event in carbon dioxide fixation, as well as the oxidative fragmentation of the pentose substrate in the photorespiration process. Both reactions occur simultaneously and in competition at the same active site. This chain is Ribulose bisphosphate carboxylase large chain (rbcL), found in Pinus pinaster (Maritime pine).